A 471-amino-acid polypeptide reads, in one-letter code: Cytochrome P450 monooxygenase afvE (471 aa).

The helical transmembrane segment at 265 to 285 (IIFYHFELSTPVAFFIIFAVY) threads the bilayer. A heme-binding site is contributed by C410.

It belongs to the cytochrome P450 family. Requires heme as cofactor.

Its subcellular location is the membrane. Its pathway is secondary metabolite biosynthesis. In terms of biological role, cytochrome P450 monooxygenase; part of the gene cluster that mediates the biosynthesis of aflavarin, a bicoumarin that exhibits anti-insectan activity against the fungivorous beetle C.hemipterus. The protein is Cytochrome P450 monooxygenase afvE of Aspergillus flavus (strain ATCC 200026 / FGSC A1120 / IAM 13836 / NRRL 3357 / JCM 12722 / SRRC 167).